Consider the following 213-residue polypeptide: ATP-dependent Clp protease proteolytic subunit 3 (213 aa).

Ser107 (nucleophile) is an active-site residue. The active site involves His132.

This sequence belongs to the peptidase S14 family. Fourteen ClpP subunits assemble into 2 heptameric rings which stack back to back to give a disk-like structure with a central cavity, resembling the structure of eukaryotic proteasomes.

It localises to the cytoplasm. The enzyme catalyses Hydrolysis of proteins to small peptides in the presence of ATP and magnesium. alpha-casein is the usual test substrate. In the absence of ATP, only oligopeptides shorter than five residues are hydrolyzed (such as succinyl-Leu-Tyr-|-NHMec, and Leu-Tyr-Leu-|-Tyr-Trp, in which cleavage of the -Tyr-|-Leu- and -Tyr-|-Trp bonds also occurs).. Its function is as follows. Cleaves peptides in various proteins in a process that requires ATP hydrolysis. Has a chymotrypsin-like activity. Plays a major role in the degradation of misfolded proteins. This chain is ATP-dependent Clp protease proteolytic subunit 3, found in Frankia casuarinae (strain DSM 45818 / CECT 9043 / HFP020203 / CcI3).